The chain runs to 215 residues: Probable GTP-binding protein EngB (215 aa).

In terms of domain architecture, EngB-type G spans 30-204; that stretch reads TGIEVAFAGR…RQKLDTWFSE (175 aa). GTP contacts are provided by residues 38–45, 65–69, 83–86, 150–153, and 183–185; these read GRSNAGKS, GRTQL, DLPG, TKAD, and FSS. Positions 45 and 67 each coordinate Mg(2+).

This sequence belongs to the TRAFAC class TrmE-Era-EngA-EngB-Septin-like GTPase superfamily. EngB GTPase family. It depends on Mg(2+) as a cofactor.

Necessary for normal cell division and for the maintenance of normal septation. The polypeptide is Probable GTP-binding protein EngB (Escherichia coli O1:K1 / APEC).